Consider the following 262-residue polypeptide: 1-(5-phosphoribosyl)-5-[(5-phosphoribosylamino)methylideneamino] imidazole-4-carboxamide isomerase (262 aa).

The active-site Proton acceptor is the D8. The active-site Proton donor is D129. Residues 243-262 form a disordered region; it reads KDNVGQEDHSLPRCEPGPRG.

Belongs to the HisA/HisF family.

Its subcellular location is the cytoplasm. It carries out the reaction 1-(5-phospho-beta-D-ribosyl)-5-[(5-phospho-beta-D-ribosylamino)methylideneamino]imidazole-4-carboxamide = 5-[(5-phospho-1-deoxy-D-ribulos-1-ylimino)methylamino]-1-(5-phospho-beta-D-ribosyl)imidazole-4-carboxamide. Its pathway is amino-acid biosynthesis; L-histidine biosynthesis; L-histidine from 5-phospho-alpha-D-ribose 1-diphosphate: step 4/9. This chain is 1-(5-phosphoribosyl)-5-[(5-phosphoribosylamino)methylideneamino] imidazole-4-carboxamide isomerase, found in Desulforudis audaxviator (strain MP104C).